A 341-amino-acid polypeptide reads, in one-letter code: Bis(monoacylglycero)phosphate synthase CLN5 (341 aa).

At 1 to 13 (MLRGGPCGAHWRP) the chain is on the cytoplasmic side. A helical; Signal-anchor for type II membrane protein membrane pass occupies residues 14-30 (ALALALLGLATILGASP). The Lumenal segment spans residues 31–341 (TSGQRWPVPY…PTRHTTFTDL (311 aa)). Cystine bridges form between Cys53–Cys142 and Cys60–Cys148. The Proton acceptor role is filled by His100. N-linked (GlcNAc...) asparagine glycans are attached at residues Asn113, Asn126, Asn161, and Asn186. Cys214 (nucleophile; Acyl-thioester intermediate) is an active-site residue. N-linked (GlcNAc...) asparagine glycans are attached at residues Asn238, Asn254, and Asn264. Residues 287 to 326 (FLMNFLKIFDTVIIHRQFYLFYNFEYWFLPMKPPFVKITY) are membrane-anchoring.

The protein belongs to the CLN5 family. Multimer. Interacts with PPT1, TPP1, CLN3, CLN6, CLN8, ATP5F1A and ATP5F1B. Interacts with SORT1, RAB5A and RAB7A. In terms of processing, N-glycosylated with both high mannose and complex type sugars. Glycosylation is important for proper folding and trafficking to the lysosomes. Post-translationally, the type II membrane signal anchor is proteolytically cleaved to produce a mature form that is transported to the lysosomes (Bis(monoacylglycero)phosphate synthase CLN5, secreted form). Can undergo proteolytic cleavage at the C-terminus, probably by a cysteine protease and may involve the removal of approximately 10-15 residues from the C-terminal end. Heart, kidney, liver, spleen, muscle and rectum (at protein level).

The protein localises to the lysosome. It is found in the membrane. The enzyme catalyses S-hexadecanoyl-L-cysteinyl-[protein] + H2O = L-cysteinyl-[protein] + hexadecanoate + H(+). The catalysed reaction is 2 1-acyl-sn-glycero-3-phospho-(1'-sn-glycerol) = 1-acyl-sn-glycero-3-phospho-(3'-acyl-sn-1'-glycerol) + sn-glycero-3-phospho-(1'-sn-glycerol). It catalyses the reaction 2 1-(9Z-octadecenoyl)-sn-glycero-3-phospho-(1'-sn-glycerol) = 1-(9Z-octadecenoyl)-sn-glycero-3-phospho-(3'-(9Z-octadecenoyl)-1'-sn-glycerol) + sn-glycero-3-phospho-(1'-sn-glycerol). It carries out the reaction 2 1-octadecanoyl-sn-glycero-3-phospho-(1'-sn-glycerol) = 1-octadecanoyl-sn-glycero-3-phospho-(3'-octadecanoyl-1'-sn-glycerol) + sn-glycero-3-phospho-(1'-sn-glycerol). The enzyme catalyses 2 1-hexadecanoyl-sn-glycero-3-phospho-(1'-sn-glycerol) = 1-hexadecanoyl-sn-glycero-3-phospho-(3'-hexadecanoyl-1'-sn-glycerol) + sn-glycero-3-phospho-(1'-sn-glycerol). The catalysed reaction is 2 1-tetradecanoyl-sn-glycero-3-phospho-(1'-sn-glycerol) = 1-tetradecanoyl-sn-glycero-3-phospho-(3'-tetradecanoyl-1'-sn-glycerol) + sn-glycero-3-phospho-(1'-sn-glycerol). In terms of biological role, catalyzes the synthesis of bis(monoacylglycero)phosphate (BMP) via transacylation of 2 molecules of lysophosphatidylglycerol (LPG). BMP also known as lysobisphosphatidic acid plays a key role in the formation of intraluminal vesicles and in maintaining intracellular cholesterol homeostasis. Can use only LPG as the exclusive lysophospholipid acyl donor for base exchange and displays BMP synthase activity towards various LPGs (LPG 14:0, LPG 16:0, LPG 18:0, LPG 18:1) with a higher preference for longer chain lengths. Plays a role in influencing the retrograde trafficking of lysosomal sorting receptors SORT1 and IGF2R from the endosomes to the trans-Golgi network by controlling the recruitment of retromer complex to the endosomal membrane. Regulates the localization and activation of RAB7A which is required to recruit the retromer complex to the endosomal membrane. Its function is as follows. Exhibits palmitoyl protein thioesterase (S-depalmitoylation) activity in vitro and most likely plays a role in protein S-depalmitoylation. The chain is Bis(monoacylglycero)phosphate synthase CLN5 (Cln5) from Mus musculus (Mouse).